The chain runs to 178 residues: V-type proton ATPase subunit c''2 (178 aa).

At 1 to 24 (MSGVAIHASSWGAALVRISPYTFS) the chain is on the lumenal side. The chain crosses the membrane as a helical span at residues 25 to 45 (AIGIAISIGVSVLGAAWGIYI). The Cytoplasmic segment spans residues 46–64 (TGSSLIGAAIEAPRITSKN). A helical membrane pass occupies residues 65–85 (LISVIFCEAVAIYGVIVAIIL). The Lumenal segment spans residues 86-108 (QTKLESVPSSKMYDAESLRAGYA). A helical membrane pass occupies residues 109 to 129 (IFASGIIVGFANLVCGLCVGI). The Cytoplasmic portion of the chain corresponds to 130–147 (IGSSCALSDAQNSTLFVK). The chain crosses the membrane as a helical span at residues 148–168 (ILVIEIFGSALGLFGVIVGII). Residues 169 to 178 (MSAQATWPTK) lie on the Lumenal side of the membrane.

It belongs to the V-ATPase proteolipid subunit family. V-ATPase is a heteromultimeric enzyme composed of a peripheral catalytic V1 complex (components A to H) attached to an integral membrane V0 proton pore complex (components: a, c, c'', d and e). The proteolipid components c and c'' are present as a hexameric ring that forms the proton-conducting pore. Interacts with APD2.

It localises to the endoplasmic reticulum membrane. It is found in the golgi apparatus membrane. Its function is as follows. Proton-conducting pore forming subunit of the membrane integral V0 complex of vacuolar ATPase. V-ATPase is responsible for acidifying a variety of intracellular compartments in eukaryotic cells. In Arabidopsis thaliana (Mouse-ear cress), this protein is V-type proton ATPase subunit c''2 (VHA-c''2).